We begin with the raw amino-acid sequence, 88 residues long: Cell division topological specificity factor (88 aa).

It belongs to the MinE family.

In terms of biological role, prevents the cell division inhibition by proteins MinC and MinD at internal division sites while permitting inhibition at polar sites. This ensures cell division at the proper site by restricting the formation of a division septum at the midpoint of the long axis of the cell. The polypeptide is Cell division topological specificity factor (Clostridium kluyveri (strain ATCC 8527 / DSM 555 / NBRC 12016 / NCIMB 10680 / K1)).